The following is a 255-amino-acid chain: tRNA (guanine-N(7)-)-methyltransferase (255 aa).

The disordered stretch occupies residues 1–29 (MSDSDASRPSAIASDGPDAAGKHASGAPW). 4 residues coordinate S-adenosyl-L-methionine: Glu-86, Glu-111, Asp-138, and Asp-160. Asp-160 is a catalytic residue. Residues Lys-164, Asp-196, and 233–236 (TRYE) each bind substrate.

Belongs to the class I-like SAM-binding methyltransferase superfamily. TrmB family.

It carries out the reaction guanosine(46) in tRNA + S-adenosyl-L-methionine = N(7)-methylguanosine(46) in tRNA + S-adenosyl-L-homocysteine. Its pathway is tRNA modification; N(7)-methylguanine-tRNA biosynthesis. In terms of biological role, catalyzes the formation of N(7)-methylguanine at position 46 (m7G46) in tRNA. The protein is tRNA (guanine-N(7)-)-methyltransferase of Ruegeria sp. (strain TM1040) (Silicibacter sp.).